A 230-amino-acid chain; its full sequence is Probable GTP-binding protein EngB (230 aa).

One can recognise an EngB-type G domain in the interval 36–224; the sequence is ERPKVIVMGR…KHRINKRINI (189 aa). GTP is bound by residues 44 to 51, 69 to 73, 86 to 89, 166 to 169, and 201 to 203; these read GRSNVGKS, GVTLK, DLPG, NKMD, and VPA. Mg(2+) contacts are provided by serine 51 and threonine 71.

Belongs to the TRAFAC class TrmE-Era-EngA-EngB-Septin-like GTPase superfamily. EngB GTPase family. It depends on Mg(2+) as a cofactor.

Its function is as follows. Necessary for normal cell division and for the maintenance of normal septation. This Methanococcus maripaludis (strain DSM 14266 / JCM 13030 / NBRC 101832 / S2 / LL) protein is Probable GTP-binding protein EngB.